Consider the following 559-residue polypeptide: Protein aurora borealis (559 aa).

The interval methionine 1 to serine 27 is disordered. A phosphoserine mark is found at serine 183, serine 191, serine 270, serine 325, and serine 331. At threonine 354 the chain carries Phosphothreonine.

It belongs to the BORA family. In terms of assembly, interacts with AURKA. In terms of processing, phosphorylated by AURKA.

In terms of biological role, required for the activation of AURKA at the onset of mitosis. The polypeptide is Protein aurora borealis (BORA) (Homo sapiens (Human)).